Reading from the N-terminus, the 366-residue chain is Tyrosine--tRNA ligase (366 aa).

Tyrosine 41, tyrosine 167, glutamine 171, aspartate 174, and glutamine 189 together coordinate L-tyrosine. Residues lysine 241–serine 245 carry the 'KMSKS' region motif. Lysine 244 lines the ATP pocket.

This sequence belongs to the class-I aminoacyl-tRNA synthetase family. TyrS type 4 subfamily. In terms of assembly, homodimer.

The protein localises to the cytoplasm. It carries out the reaction tRNA(Tyr) + L-tyrosine + ATP = L-tyrosyl-tRNA(Tyr) + AMP + diphosphate + H(+). In terms of biological role, catalyzes the attachment of tyrosine to tRNA(Tyr) in a two-step reaction: tyrosine is first activated by ATP to form Tyr-AMP and then transferred to the acceptor end of tRNA(Tyr). This Saccharolobus solfataricus (strain ATCC 35092 / DSM 1617 / JCM 11322 / P2) (Sulfolobus solfataricus) protein is Tyrosine--tRNA ligase.